Consider the following 293-residue polypeptide: Ribosomal RNA small subunit methyltransferase A (293 aa).

The S-adenosyl-L-methionine site is built by Asn29, Leu31, Gly56, Glu77, Asp102, and Asn127.

This sequence belongs to the class I-like SAM-binding methyltransferase superfamily. rRNA adenine N(6)-methyltransferase family. RsmA subfamily.

It localises to the cytoplasm. It catalyses the reaction adenosine(1518)/adenosine(1519) in 16S rRNA + 4 S-adenosyl-L-methionine = N(6)-dimethyladenosine(1518)/N(6)-dimethyladenosine(1519) in 16S rRNA + 4 S-adenosyl-L-homocysteine + 4 H(+). Functionally, specifically dimethylates two adjacent adenosines (A1518 and A1519) in the loop of a conserved hairpin near the 3'-end of 16S rRNA in the 30S particle. May play a critical role in biogenesis of 30S subunits. This is Ribosomal RNA small subunit methyltransferase A from Geobacillus kaustophilus (strain HTA426).